The chain runs to 239 residues: tRNA (guanine-N(7)-)-methyltransferase (239 aa).

S-adenosyl-L-methionine is bound by residues Glu-69, Glu-94, Asp-121, and Asp-144. Asp-144 is a catalytic residue. Residue Lys-148 participates in substrate binding. The interval 150–155 (RHNKRR) is interaction with RNA. Substrate is bound by residues Asp-180 and 217 to 220 (TKFE).

This sequence belongs to the class I-like SAM-binding methyltransferase superfamily. TrmB family. As to quaternary structure, monomer.

The enzyme catalyses guanosine(46) in tRNA + S-adenosyl-L-methionine = N(7)-methylguanosine(46) in tRNA + S-adenosyl-L-homocysteine. It functions in the pathway tRNA modification; N(7)-methylguanine-tRNA biosynthesis. Catalyzes the formation of N(7)-methylguanine at position 46 (m7G46) in tRNA. The polypeptide is tRNA (guanine-N(7)-)-methyltransferase (Escherichia coli O6:H1 (strain CFT073 / ATCC 700928 / UPEC)).